The sequence spans 159 residues: Major allergen Mal d 1 (159 aa).

The protein belongs to the BetVI family.

The polypeptide is Major allergen Mal d 1 (Malus domestica (Apple)).